We begin with the raw amino-acid sequence, 628 residues long: Vacuolar-sorting receptor 4 (628 aa).

The signal sequence occupies residues M1–A24. Topologically, residues R25–A569 are lumenal. The PA domain maps to Q56–I168. N148, N294, and N434 each carry an N-linked (GlcNAc...) asparagine glycan. 2 EGF-like domains span residues E416 to E466 and G469 to E516. 7 cysteine pairs are disulfide-bonded: C420–C438, C427–C447, C449–C465, C473–C493, C480–C501, C503–C515, and C545–C558. The EGF-like 3; calcium-binding domain occupies D517–I559. The chain crosses the membrane as a helical span at residues W570 to V590. Residues Y591–A628 are Cytoplasmic-facing. The short motif at Y610–L613 is the Tyrosine-based internalization motif element.

It belongs to the VSR (BP-80) family. In terms of tissue distribution, expressed at low levels in seeds, seedlings, roots, stems, leaves, flowers and siliques.

The protein localises to the membrane. Its subcellular location is the golgi apparatus membrane. It localises to the cytoplasmic vesicle. The protein resides in the clathrin-coated vesicle membrane. It is found in the prevacuolar compartment membrane. In terms of biological role, vacuolar-sorting receptor (VSR) involved in clathrin-coated vesicles sorting from Golgi apparatus to vacuoles. This is Vacuolar-sorting receptor 4 (VSR4) from Arabidopsis thaliana (Mouse-ear cress).